Here is a 1027-residue protein sequence, read N- to C-terminus: Abnormal embryogenesis protein 30 (1027 aa).

2 WD repeats span residues Arg-18 to Val-65 and Lys-70 to Ser-109. Disordered regions lie at residues Asn-619 to Leu-655 and Ala-1005 to Ile-1027. Composition is skewed to acidic residues over residues Leu-625–Gly-647 and Asp-1014–Ile-1027.

It belongs to the APC4 family. The APC/C is probably composed of at least 12 subunits: apc-2, apc-10, apc-11, cdc-26, emb-1, emb-27, emb-30, mat-1, mat-2, mat-3, such-1 and gfi-3.

It participates in protein modification; protein ubiquitination. In terms of biological role, probable component of the anaphase promoting complex/cyclosome (APC/C), a cell cycle-regulated E3 ubiquitin ligase that controls progression through mitosis and the G1 phase of the cell cycle. The APC/C complex acts by mediating ubiquitination and subsequent degradation of target proteins. Developmental role in early embryogenesis and the metaphase to anaphase transition in oocyte and spermatocyte meiosis and mitosis in somatic and germ cells. Required for embryonic anterior-posterior axis formation. Negatively regulates ify-1 protein levels during meiosis I. Plays a role in regulating the abundance of glr-1 receptors in postmitotic neurons, which may in turn control animal locomotion. Involved in regulating GABA neurotransmitter release at neuromuscular junctions in GABA motor neurons. This Caenorhabditis elegans protein is Abnormal embryogenesis protein 30.